The sequence spans 407 residues: Putative replication protein A (407 aa).

This sequence belongs to the ParA family.

The protein is Putative replication protein A of Sinorhizobium fredii (strain NBRC 101917 / NGR234).